The primary structure comprises 214 residues: Putative pyrophosphatase PpaX (214 aa).

Asp8 functions as the Nucleophile in the catalytic mechanism.

Belongs to the HAD-like hydrolase superfamily. PpaX family. It depends on Mg(2+) as a cofactor.

The catalysed reaction is diphosphate + H2O = 2 phosphate + H(+). This is Putative pyrophosphatase PpaX from Clostridium perfringens (strain 13 / Type A).